Reading from the N-terminus, the 114-residue chain is Non-specific lipid-transfer protein 1 (114 aa).

Positions 1–23 are cleaved as a signal peptide; sequence MEIAGKIACFVVLCMVVAAPCAE. 4 disulfides stabilise this stretch: Cys-27/Cys-73, Cys-37/Cys-50, Cys-51/Cys-96, and Cys-71/Cys-110.

This sequence belongs to the plant LTP family. As to expression, high expression in leaf epidermis and shoot apex, and also in root epidermis during seedling germination.

Plant non-specific lipid-transfer proteins transfer phospholipids as well as galactolipids across membranes. Binds cis-unsaturated fatty acids and jasmonic acid with a higher affinity than linear chain fatty acids. Formation of the complex with jasmonic acid results in a conformational change facilitating the LPT1 binding on the elicitin plasma membrane receptor that is known to be involved in plant defense induction. May also play a role in wax or cutin deposition in the cell walls of expanding epidermal cells and certain secretory tissues. In Nicotiana tabacum (Common tobacco), this protein is Non-specific lipid-transfer protein 1 (LTP1).